The following is a 548-amino-acid chain: Glutamate--tRNA ligase (548 aa).

Residues 102 to 112 carry the 'HIGH' region motif; it reads PSPSGPLHIGH.

Belongs to the class-I aminoacyl-tRNA synthetase family. Glutamate--tRNA ligase type 2 subfamily.

The protein resides in the cytoplasm. It carries out the reaction tRNA(Glu) + L-glutamate + ATP = L-glutamyl-tRNA(Glu) + AMP + diphosphate. Its function is as follows. Catalyzes the attachment of glutamate to tRNA(Glu) in a two-step reaction: glutamate is first activated by ATP to form Glu-AMP and then transferred to the acceptor end of tRNA(Glu). This chain is Glutamate--tRNA ligase, found in Thermoplasma volcanium (strain ATCC 51530 / DSM 4299 / JCM 9571 / NBRC 15438 / GSS1).